Reading from the N-terminus, the 195-residue chain is Probable nicotinate-nucleotide adenylyltransferase (195 aa).

Belongs to the NadD family.

It carries out the reaction nicotinate beta-D-ribonucleotide + ATP + H(+) = deamido-NAD(+) + diphosphate. The protein operates within cofactor biosynthesis; NAD(+) biosynthesis; deamido-NAD(+) from nicotinate D-ribonucleotide: step 1/1. Functionally, catalyzes the reversible adenylation of nicotinate mononucleotide (NaMN) to nicotinic acid adenine dinucleotide (NaAD). The protein is Probable nicotinate-nucleotide adenylyltransferase of Chlorobaculum parvum (strain DSM 263 / NCIMB 8327) (Chlorobium vibrioforme subsp. thiosulfatophilum).